The following is a 506-amino-acid chain: Histidine ammonia-lyase (506 aa).

A cross-link (5-imidazolinone (Ala-Gly)) is located at residues 143–145; sequence ASG. The residue at position 144 (Ser-144) is a 2,3-didehydroalanine (Ser).

It belongs to the PAL/histidase family. In terms of processing, contains an active site 4-methylidene-imidazol-5-one (MIO), which is formed autocatalytically by cyclization and dehydration of residues Ala-Ser-Gly.

It localises to the cytoplasm. It catalyses the reaction L-histidine = trans-urocanate + NH4(+). Its pathway is amino-acid degradation; L-histidine degradation into L-glutamate; N-formimidoyl-L-glutamate from L-histidine: step 1/3. The chain is Histidine ammonia-lyase from Salmonella choleraesuis (strain SC-B67).